We begin with the raw amino-acid sequence, 171 residues long: S-ribosylhomocysteine lyase (171 aa).

Fe cation-binding residues include His54, His58, and Cys128.

It belongs to the LuxS family. As to quaternary structure, homodimer. Fe cation is required as a cofactor.

It catalyses the reaction S-(5-deoxy-D-ribos-5-yl)-L-homocysteine = (S)-4,5-dihydroxypentane-2,3-dione + L-homocysteine. Involved in the synthesis of autoinducer 2 (AI-2) which is secreted by bacteria and is used to communicate both the cell density and the metabolic potential of the environment. The regulation of gene expression in response to changes in cell density is called quorum sensing. Catalyzes the transformation of S-ribosylhomocysteine (RHC) to homocysteine (HC) and 4,5-dihydroxy-2,3-pentadione (DPD). The chain is S-ribosylhomocysteine lyase from Cronobacter sakazakii (strain ATCC BAA-894) (Enterobacter sakazakii).